The sequence spans 154 residues: Endoribonuclease YbeY (154 aa).

Positions 113, 117, and 123 each coordinate Zn(2+).

Belongs to the endoribonuclease YbeY family. Requires Zn(2+) as cofactor.

Its subcellular location is the cytoplasm. In terms of biological role, single strand-specific metallo-endoribonuclease involved in late-stage 70S ribosome quality control and in maturation of the 3' terminus of the 16S rRNA. The protein is Endoribonuclease YbeY of Vibrio vulnificus (strain CMCP6).